Reading from the N-terminus, the 124-residue chain is Orexigenic neuropeptide QRFP (124 aa).

Residues 1-17 (MRGFRPLLSLLLPLSAC) form the signal peptide. A propeptide spanning residues 18 to 79 (FPLLDRRGPT…REHTGFRLGR (62 aa)) is cleaved from the precursor. Residues 63–101 (REQQASHREHTGFRLGRQDGSSEAAGFLPADSEKASGPL) form a disordered region. Phe-122 is subject to Phenylalanine amide.

It belongs to the RFamide neuropeptide family. As to quaternary structure, ligand for the G-protein coupled receptor QRFPR/GPR103. Expressed in the brain with highest levels in the periventricular hypothalamic nucleus and lateral hypothalamic areas. Expressed at moderate levels in the adrenal gland, eye, heart, intestine, liver, lung, kidney, mesenteric lymph node, ovary, placenta, Peyer patches, skin, spleen, stomach, testis, thymus and uterus.

It localises to the secreted. Its function is as follows. Stimulates feeding and grooming behavior, metabolic rate and locomotor activity and increases blood pressure. May have orexigenic activity. May promote aldosterone secretion by the adrenal gland. In Mus musculus (Mouse), this protein is Orexigenic neuropeptide QRFP.